The primary structure comprises 435 residues: Membrane-bound ghrelin O-acyltransferase MBOAT4 (435 aa).

The Lumenal segment spans residues 1–5 (MDWLQ). A helical membrane pass occupies residues 6–26 (FFFLHPVSLYQGAAFPFALLF). The Cytoplasmic portion of the chain corresponds to 27-40 (NYLCITESFPTRAR). A helical membrane pass occupies residues 41–56 (YLFLLAGGGVLALAAM). Topologically, residues 57–59 (GPY) are lumenal. Residues 60–76 (ALLIFIPALCAVAMISS) form a helical membrane-spanning segment. Residues 77–82 (LSPQEV) are Cytoplasmic-facing. Residues 83–101 (HGLTFFFQMGWQTLCHLGL) traverse the membrane as a helical segment. Over 102–120 (HYKEYYLCEPPPVRFYITL) the chain is Lumenal. Residues 121-136 (SSLMLLTQRVTSLSLD) traverse the membrane as a helical segment. At 137–206 (ISEGKVEAAW…YPSISFWALT (70 aa)) the chain is on the cytoplasmic side. The chain crosses the membrane as a helical span at residues 207-227 (WRGLQILGLECLKVALRRVVS). Over 228–240 (AGAGLDDCQRLEC) the chain is Lumenal. The helical transmembrane segment at 241–261 (IYIMWSTAGLFKLTYYSHWIL) threads the bilayer. Topologically, residues 262–324 (DDSLLHAAGF…KRLVFQRSRR (63 aa)) are cytoplasmic. Catalysis depends on residues asparagine 307 and histidine 338. The chain crosses the membrane as a helical span at residues 325-338 (WPVLQTFAFSAWWH). Residues 339 to 340 (GL) are Lumenal-facing. The helical transmembrane segment at 341-357 (HPGQVFGFLCWSVMVKA) threads the bilayer. The Cytoplasmic segment spans residues 358–376 (DYLIHTFANGCIRSWPLRL). The helical transmembrane segment at 377–397 (LYRSLTWAHTQIIIAYVMLAV) threads the bilayer. The Lumenal portion of the chain corresponds to 398–407 (EGRSFSSLCR). A helical transmembrane segment spans residues 408 to 428 (LCCSYNSIFPVTYCLLLFLLA). The Cytoplasmic segment spans residues 429–435 (RRKHKCN).

This sequence belongs to the membrane-bound acyltransferase family. As to quaternary structure, monomer. In terms of processing, not glycosylated.

It localises to the endoplasmic reticulum membrane. The catalysed reaction is octanoyl-CoA + L-seryl-[protein] = O-octanoyl-L-seryl-[protein] + CoA. The enzyme catalyses decanoyl-CoA + L-seryl-[protein] = O-decanoyl-L-seryl-[protein] + CoA. It catalyses the reaction L-seryl-[protein] + acetyl-CoA = O-acetyl-L-seryl-[protein] + CoA. It carries out the reaction L-seryl-[protein] + butanoyl-CoA = O-butanoyl-L-seryl-[protein] + CoA. The catalysed reaction is pentanoyl-CoA + L-seryl-[protein] = O-pentanoyl-L-seryl-[protein] + CoA. The enzyme catalyses hexanoyl-CoA + L-seryl-[protein] = O-hexanoyl-L-seryl-[protein] + CoA. It catalyses the reaction heptanoyl-CoA + L-seryl-[protein] = O-heptanoyl-L-seryl-[protein] + CoA. It carries out the reaction nonanoyl-CoA + L-seryl-[protein] = O-nonanoyl-L-seryl-[protein] + CoA. The catalysed reaction is L-seryl-[protein] + dodecanoyl-CoA = O-dodecanoyl-L-seryl-[protein] + CoA. The enzyme catalyses L-seryl-[protein] + tetradecanoyl-CoA = O-tetradecanoyl-L-seryl-[protein] + CoA. It catalyses the reaction a fatty acyl-CoA + L-seryl-[protein] = O-fatty acyl-L-seryl-[protein] + CoA. Catalyzes ghrelin acylation at 'Ser-3' using preferentially octanoyl-CoA, hexanoyl-CoA and decanoyl-CoA as acyl-CoA donors leading to ghrelin activity. In vitro uses also acyl-CoA donors of different lengths from short-chain (C2) to long-chain fatty acids (C16) knowing that acyl-CoA donors from butanoyl-CoA (C4) to dodecanoyl-CoA (C12) are more efficient compared to longer acyl-CoA donors, such as myristoyl-CoA (C14) and palmitoyl-CoA (C16) that are not efficient. In Rattus norvegicus (Rat), this protein is Membrane-bound ghrelin O-acyltransferase MBOAT4.